We begin with the raw amino-acid sequence, 455 residues long: SVGFKAGVKDYKLTYYTPEYETKDTDILAAFRVTPQPGVPPEEAGAAVAAESSTGTWTTVWTDGLTSLDRYKGRCYHIEPVAGEENQYIAYVAYPLDLFEEGSVTNMFTSIVGNVFGFKALRALRLEDFRIPTAYVKTFQGPPHGIQVERDKLNKYGRPLLGCTIKPKLGLSAKNYGRAVYECLRGGLDFTKDDENVNSQPFMRWRDRFLFCAEALYKAQAETGEIKGHYLNATAGTCEEMIKRAVFARELGVPIIMHDYLTGGFTANTSLAHYCRDNGLLLHIHRAMHAVIDRQKNHGMHFRVLAKALRLSGGDHVHSGTVVGKLEGEREITLGFVDLIRDDLIEKDRSRGIYFTQDWVSLPGVLPVASGGIHVWHMPALTEIFGDDSVLQFGGGTLGHPWGNAPGAVANRVALEACVQARNEGRDLAREGNEIIREASKWSPELAAACEVWKE.

At Lys5 the chain carries N6,N6,N6-trimethyllysine. Substrate is bound by residues Asn114 and Thr164. The active-site Proton acceptor is Lys166. Lys168 contacts substrate. The Mg(2+) site is built by Lys192, Asp194, and Glu195. At Lys192 the chain carries N6-carboxylysine. Residue His285 is the Proton acceptor of the active site. Residues Arg286, His318, and Ser370 each contribute to the substrate site.

The protein belongs to the RuBisCO large chain family. Type I subfamily. Heterohexadecamer of 8 large chains and 8 small chains; disulfide-linked. The disulfide link is formed within the large subunit homodimers. Mg(2+) is required as a cofactor. In terms of processing, the disulfide bond which can form in the large chain dimeric partners within the hexadecamer appears to be associated with oxidative stress and protein turnover.

It localises to the plastid. Its subcellular location is the chloroplast. It carries out the reaction 2 (2R)-3-phosphoglycerate + 2 H(+) = D-ribulose 1,5-bisphosphate + CO2 + H2O. The catalysed reaction is D-ribulose 1,5-bisphosphate + O2 = 2-phosphoglycolate + (2R)-3-phosphoglycerate + 2 H(+). Its function is as follows. RuBisCO catalyzes two reactions: the carboxylation of D-ribulose 1,5-bisphosphate, the primary event in carbon dioxide fixation, as well as the oxidative fragmentation of the pentose substrate in the photorespiration process. Both reactions occur simultaneously and in competition at the same active site. This is Ribulose bisphosphate carboxylase large chain from Erythrina crista-galli (Cockspur coral tree).